A 402-amino-acid chain; its full sequence is Thyroid hormone receptor alpha (402 aa).

Residues 1 to 22 are disordered; it reads MEQKPSTLDPLSEPEDTRWLDG. Residues 1–50 form a modulating region; it reads MEQKPSTLDPLSEPEDTRWLDGKRKRKSSQCLVKSSMSGYIPSYLDKDEQ. Serine 12 bears the Phosphoserine; by CK2 mark. Serine 28 is modified (phosphoserine). Residues cysteine 51, cysteine 54, cysteine 68, cysteine 71, cysteine 89, cysteine 95, cysteine 105, and cysteine 108 each coordinate Zn(2+). 2 NR C4-type zinc fingers span residues 51 to 71 and 89 to 113; these read CVVC…CEGC and CKYD…FKKC. A DNA-binding region (nuclear receptor) is located at residues 51–125; sequence CVVCGDKATG…VGMAMDLVLD (75 aa). An NR LBD domain is found at 161–402; that stretch reads EEWELIHVVT…ELFPPLFLEV (242 aa). 2 residues coordinate 3,3',5-triiodo-L-thyronine: arginine 226 and serine 275.

The protein belongs to the nuclear hormone receptor family. NR1 subfamily. In terms of assembly, probably interacts with SFPQ.

The protein resides in the nucleus. In terms of biological role, nuclear hormone receptor that can act as a repressor or activator of transcription. High affinity receptor for thyroid hormones, including triiodothyronine and thyroxine. In Aptenodytes patagonicus (King penguin), this protein is Thyroid hormone receptor alpha (THRA).